The chain runs to 227 residues: Calcium-binding protein 1 (227 aa).

Glycine 2 is lipidated: N-myristoyl glycine. The S-palmitoyl cysteine moiety is linked to residue cysteine 4. EF-hand domains lie at 82 to 117 (EEIE…MGYM), 136 to 153 (GHVD…KLLA), 159 to 194 (IGVK…LLGH), and 196 to 227 (VGHR…MMSR). Ca(2+) is bound by residues aspartate 95, aspartate 97, aspartate 99, tyrosine 101, and aspartate 106. Ca(2+) is bound by residues aspartate 172, asparagine 174, aspartate 176, and glutamate 178. Serine 180 is modified (phosphoserine). Ca(2+)-binding residues include glutamate 183, aspartate 209, asparagine 211, aspartate 213, arginine 215, and glutamate 220.

Homodimer; when bound to calcium or magnesium. Interacts (via C-terminus) with ITPR1, ITPR2 and ITPR3. This binding is calcium dependent and the interaction correlates with calcium concentration. An additional calcium-independent interaction with the N-terminus of ITPR1 results in a decreased InsP(3) binding to the receptor. Interacts with CACNA1A (via C-terminal CDB motif) in the pre- and postsynaptic membranes. Interacts with CACNA1D and CACNA1C (via C-terminal C and IQ motifs). The binding to the C motif is calcium independent whereas the binding to IQ requires the presence of calcium and is mutually exclusive with calmodulin binding. Interacts with TRPC5 (via C-terminus). Interacts (via EF-hands 1 and 2) at microtubules with MAP1LC3B. Interacts with MYO1C. Interacts (via EF-hands 1 and 2) with NSMF (via the central NLS-containing motif region), the interaction occurs in a calcium dependent manner after synaptic NMDA receptor stimulation and prevents nuclear import of NSMF. Interacts with SPACA9 homolog. In terms of processing, phosphorylated. The phosphorylation regulates the activity. In terms of tissue distribution, expressed in the inner retina, specifically in amacrine cells and in cone OFF-bipolar cells (at protein level).

Modulates calcium-dependent activity of inositol 1,4,5-triphosphate receptors (ITPRs). Inhibits agonist-induced intracellular calcium signaling. Enhances inactivation and does not support calcium-dependent facilitation of voltage-dependent P/Q-type calcium channels. Causes calcium-dependent facilitation and inhibits inactivation of L-type calcium channels by binding to the same sites as calmodulin in the C-terminal domain of CACNA1C, but has an opposite effect on channel function. Suppresses the calcium-dependent inactivation of CACNA1D. Inhibits TRPC5 channels. Prevents NMDA receptor-induced cellular degeneration. Required for the normal transfer of light signals through the retina. This chain is Calcium-binding protein 1 (Cabp1), found in Mus musculus (Mouse).